A 461-amino-acid polypeptide reads, in one-letter code: Chromosomal replication initiator protein DnaA (461 aa).

Residues M1–A84 form a domain I, interacts with DnaA modulators region. Residues A84 to S124 are domain II. A domain III, AAA+ region region spans residues N125–A341. G169, G171, K172, and T173 together coordinate ATP. The interval N342–S461 is domain IV, binds dsDNA.

This sequence belongs to the DnaA family. As to quaternary structure, oligomerizes as a right-handed, spiral filament on DNA at oriC.

It is found in the cytoplasm. Plays an essential role in the initiation and regulation of chromosomal replication. ATP-DnaA binds to the origin of replication (oriC) to initiate formation of the DNA replication initiation complex once per cell cycle. Binds the DnaA box (a 9 base pair repeat at the origin) and separates the double-stranded (ds)DNA. Forms a right-handed helical filament on oriC DNA; dsDNA binds to the exterior of the filament while single-stranded (ss)DNA is stabiized in the filament's interior. The ATP-DnaA-oriC complex binds and stabilizes one strand of the AT-rich DNA unwinding element (DUE), permitting loading of DNA polymerase. After initiation quickly degrades to an ADP-DnaA complex that is not apt for DNA replication. Binds acidic phospholipids. This is Chromosomal replication initiator protein DnaA from Shewanella putrefaciens (strain CN-32 / ATCC BAA-453).